Consider the following 243-residue polypeptide: MTQTHFGYQTVDEQEKAKKVAGVFHSVASNYDLMNDLMSGGLHRAWKAFTIAQANVRPGYKVLDIAGGTGDLSKAFAKRAGETGEVWHTDINESMLRVGRDRLIDKGVITPTLLCDAEKIPFPDNYFDVVTVAFGLRNMTHKDAALAEMRRVLKPAGRLLVLEFSKVWDPLKKAYDVYSFKVLPWLGDRFAKDADSYRYLAESIRMHPDQETLKTMMEQAGLDAVKYYNLSAGVVALHVGTKY.

Residues Thr-69, Asp-90, and 116–117 (DA) each bind S-adenosyl-L-methionine.

The protein belongs to the class I-like SAM-binding methyltransferase superfamily. MenG/UbiE family.

The catalysed reaction is a 2-demethylmenaquinol + S-adenosyl-L-methionine = a menaquinol + S-adenosyl-L-homocysteine + H(+). It carries out the reaction a 2-methoxy-6-(all-trans-polyprenyl)benzene-1,4-diol + S-adenosyl-L-methionine = a 5-methoxy-2-methyl-3-(all-trans-polyprenyl)benzene-1,4-diol + S-adenosyl-L-homocysteine + H(+). It participates in quinol/quinone metabolism; menaquinone biosynthesis; menaquinol from 1,4-dihydroxy-2-naphthoate: step 2/2. The protein operates within cofactor biosynthesis; ubiquinone biosynthesis. Its function is as follows. Methyltransferase required for the conversion of demethylmenaquinol (DMKH2) to menaquinol (MKH2) and the conversion of 2-polyprenyl-6-methoxy-1,4-benzoquinol (DDMQH2) to 2-polyprenyl-3-methyl-6-methoxy-1,4-benzoquinol (DMQH2). This is Ubiquinone/menaquinone biosynthesis C-methyltransferase UbiE from Paraburkholderia phymatum (strain DSM 17167 / CIP 108236 / LMG 21445 / STM815) (Burkholderia phymatum).